A 250-amino-acid chain; its full sequence is PHD finger protein ALFIN-LIKE 3 (250 aa).

An N-acetylmethionine modification is found at Met1. A disordered region spans residues 146-192 (DKSSAANQNGNKSKSNSKVRTSEGKSSKTKQPKEEDEEIDEDDEDDH). Residues 149–163 (SAANQNGNKSKSNSK) show a composition bias toward low complexity. Acidic residues predominate over residues 179-192 (EEDEEIDEDDEDDH). Residues 194-246 (ETLCGACGDSDGADEFWICCDLCEKWFHGKCVKITPARAEHIKQYKCPSCSNK) form a PHD-type zinc finger.

Belongs to the Alfin family. Ubiquitously expressed.

The protein localises to the nucleus. Functionally, histone-binding component that specifically recognizes H3 tails trimethylated on 'Lys-4' (H3K4me3), which mark transcription start sites of virtually all active genes. The protein is PHD finger protein ALFIN-LIKE 3 (AL3) of Arabidopsis thaliana (Mouse-ear cress).